The chain runs to 55 residues: Large ribosomal subunit protein bL33 (55 aa).

It belongs to the bacterial ribosomal protein bL33 family.

The protein is Large ribosomal subunit protein bL33 of Bordetella pertussis (strain Tohama I / ATCC BAA-589 / NCTC 13251).